Here is a 75-residue protein sequence, read N- to C-terminus: MMKYRRKKKPKVCKLCQSKIDYVDYKDVKLLREFLTEKEKIIPRRVTGNCAKHQRMVKIAIKRARQMALLPYVKY.

The protein belongs to the bacterial ribosomal protein bS18 family. In terms of assembly, part of the 30S ribosomal subunit. Forms a tight heterodimer with protein bS6.

Its function is as follows. Binds as a heterodimer with protein bS6 to the central domain of the 16S rRNA, where it helps stabilize the platform of the 30S subunit. This Thermosipho melanesiensis (strain DSM 12029 / CIP 104789 / BI429) protein is Small ribosomal subunit protein bS18.